Consider the following 370-residue polypeptide: Putative glutamate--cysteine ligase 2 (370 aa).

The protein belongs to the glutamate--cysteine ligase type 2 family. YbdK subfamily.

It carries out the reaction L-cysteine + L-glutamate + ATP = gamma-L-glutamyl-L-cysteine + ADP + phosphate + H(+). Functionally, ATP-dependent carboxylate-amine ligase which exhibits weak glutamate--cysteine ligase activity. In Herminiimonas arsenicoxydans, this protein is Putative glutamate--cysteine ligase 2.